The primary structure comprises 755 residues: Kelch-like protein 5 (755 aa).

A disordered region spans residues 152 to 184 (LDRPEVDDGTSEEENESDSSSCRTSNSSQTLSS). Residues 158-168 (DDGTSEEENES) are compositionally biased toward acidic residues. Residues 169–184 (DSSSCRTSNSSQTLSS) are compositionally biased toward low complexity. The BTB domain maps to 220 to 287 (CDVILVAGDR…AYTGRLELKE (68 aa)). Kelch repeat units lie at residues 468–514 (TLFA…VLDD), 515–561 (KLYV…VLEG), 563–608 (MYAV…VLSG), 609–655 (KLYA…TWNG), 657–708 (LYAI…LLGD), and 709–754 (KLYA…VTVK).

In terms of tissue distribution, expressed in adrenal gland, ovary and thyroid gland and less abundantly in lymph node, prostate, spinal cord, testis and trachea.

The protein resides in the cytoplasm. It localises to the cytoskeleton. The sequence is that of Kelch-like protein 5 (KLHL5) from Homo sapiens (Human).